Here is a 48-residue protein sequence, read N- to C-terminus: Small, acid-soluble spore protein O (48 aa).

Positions 1–23 are disordered; it reads MVKRKANHVINGMNDAKSQGKGA.

Belongs to the SspO family.

Its subcellular location is the spore core. The protein is Small, acid-soluble spore protein O of Bacillus velezensis (strain DSM 23117 / BGSC 10A6 / LMG 26770 / FZB42) (Bacillus amyloliquefaciens subsp. plantarum).